The sequence spans 215 residues: Interleukin-12 subunit alpha (215 aa).

The N-terminal stretch at 1-22 is a signal peptide; the sequence is MCQSRYLLFLATLVLLNHLTSA. Intrachain disulfides connect Cys33–Cys106, Cys60–Cys192, and Cys81–Cys119. Residues Asn35, Asn89, and Asn167 are each glycosylated (N-linked (GlcNAc...) asparagine).

Belongs to the IL-6 superfamily. In terms of assembly, heterodimer with IL12B; disulfide-linked. This heterodimer is known as interleukin IL-12. Heterodimer with EBI3/IL27B; not disulfide-linked. This heterodimer is known as interleukin IL-35. Interacts with NBR1; this interaction promotes IL-12 secretion.

It is found in the secreted. Functionally, heterodimerizes with IL12B to form the IL-12 cytokine or with EBI3/IL27B to form the IL-35 cytokine. IL-12 is primarily produced by professional antigen-presenting cells (APCs) such as B-cells and dendritic cells (DCs) as well as macrophages and granulocytes and regulates T-cell and natural killer-cell responses, induces the production of interferon-gamma (IFN-gamma), favors the differentiation of T-helper 1 (Th1) cells and is an important link between innate resistance and adaptive immunity. Mechanistically, exerts its biological effects through a receptor composed of IL12R1 and IL12R2 subunits. Binding to the receptor results in the rapid tyrosine phosphorylation of a number of cellular substrates including the JAK family kinases TYK2 and JAK2. In turn, recruited STAT4 gets phosphorylated and translocates to the nucleus where it regulates cytokine/growth factor responsive genes. As part of IL-35, plays essential roles in maintaining the immune homeostasis of the liver microenvironment and also functions as an immune-suppressive cytokine. Mediates biological events through unconventional receptors composed of IL12RB2 and gp130/IL6ST heterodimers or homodimers. Signaling requires the transcription factors STAT1 and STAT4, which form a unique heterodimer that binds to distinct DNA sites. The chain is Interleukin-12 subunit alpha (Il12a) from Rattus norvegicus (Rat).